The primary structure comprises 361 residues: Phosphoserine aminotransferase (361 aa).

Arginine 42 serves as a coordination point for L-glutamate. Residues 76–77 (AT), tryptophan 102, threonine 152, aspartate 172, and glutamine 195 contribute to the pyridoxal 5'-phosphate site. An N6-(pyridoxal phosphate)lysine modification is found at lysine 196. Residue 237 to 238 (NT) coordinates pyridoxal 5'-phosphate.

The protein belongs to the class-V pyridoxal-phosphate-dependent aminotransferase family. SerC subfamily. Homodimer. Requires pyridoxal 5'-phosphate as cofactor.

The protein resides in the cytoplasm. It catalyses the reaction O-phospho-L-serine + 2-oxoglutarate = 3-phosphooxypyruvate + L-glutamate. The enzyme catalyses 4-(phosphooxy)-L-threonine + 2-oxoglutarate = (R)-3-hydroxy-2-oxo-4-phosphooxybutanoate + L-glutamate. It functions in the pathway amino-acid biosynthesis; L-serine biosynthesis; L-serine from 3-phospho-D-glycerate: step 2/3. The protein operates within cofactor biosynthesis; pyridoxine 5'-phosphate biosynthesis; pyridoxine 5'-phosphate from D-erythrose 4-phosphate: step 3/5. Catalyzes the reversible conversion of 3-phosphohydroxypyruvate to phosphoserine and of 3-hydroxy-2-oxo-4-phosphonooxybutanoate to phosphohydroxythreonine. This is Phosphoserine aminotransferase from Xanthomonas axonopodis pv. citri (strain 306).